A 443-amino-acid polypeptide reads, in one-letter code: Probable glycine dehydrogenase (decarboxylating) subunit 1 (443 aa).

It belongs to the GcvP family. N-terminal subunit subfamily. As to quaternary structure, the glycine cleavage system is composed of four proteins: P, T, L and H. In this organism, the P 'protein' is a heterodimer of two subunits.

It carries out the reaction N(6)-[(R)-lipoyl]-L-lysyl-[glycine-cleavage complex H protein] + glycine + H(+) = N(6)-[(R)-S(8)-aminomethyldihydrolipoyl]-L-lysyl-[glycine-cleavage complex H protein] + CO2. In terms of biological role, the glycine cleavage system catalyzes the degradation of glycine. The P protein binds the alpha-amino group of glycine through its pyridoxal phosphate cofactor; CO(2) is released and the remaining methylamine moiety is then transferred to the lipoamide cofactor of the H protein. The polypeptide is Probable glycine dehydrogenase (decarboxylating) subunit 1 (Chloroherpeton thalassium (strain ATCC 35110 / GB-78)).